A 271-amino-acid chain; its full sequence is Formamidopyrimidine-DNA glycosylase (271 aa).

Pro2 acts as the Schiff-base intermediate with DNA in catalysis. Residue Glu3 is the Proton donor of the active site. Lys56 serves as the catalytic Proton donor; for beta-elimination activity. His89, Arg107, and Lys151 together coordinate DNA. An FPG-type zinc finger spans residues 236–270 (NVYGRAGLPCRQCGTPVRLLRQGQRSTYFCPHCQR). The active-site Proton donor; for delta-elimination activity is the Arg260.

Belongs to the FPG family. In terms of assembly, monomer. The cofactor is Zn(2+).

The enzyme catalyses Hydrolysis of DNA containing ring-opened 7-methylguanine residues, releasing 2,6-diamino-4-hydroxy-5-(N-methyl)formamidopyrimidine.. It catalyses the reaction 2'-deoxyribonucleotide-(2'-deoxyribose 5'-phosphate)-2'-deoxyribonucleotide-DNA = a 3'-end 2'-deoxyribonucleotide-(2,3-dehydro-2,3-deoxyribose 5'-phosphate)-DNA + a 5'-end 5'-phospho-2'-deoxyribonucleoside-DNA + H(+). In terms of biological role, involved in base excision repair of DNA damaged by oxidation or by mutagenic agents. Acts as a DNA glycosylase that recognizes and removes damaged bases. Has a preference for oxidized purines, such as 7,8-dihydro-8-oxoguanine (8-oxoG). Has AP (apurinic/apyrimidinic) lyase activity and introduces nicks in the DNA strand. Cleaves the DNA backbone by beta-delta elimination to generate a single-strand break at the site of the removed base with both 3'- and 5'-phosphates. This is Formamidopyrimidine-DNA glycosylase from Acidovorax sp. (strain JS42).